The sequence spans 415 residues: Serine hydroxymethyltransferase (415 aa).

Residues L120 and 124–126 (GHL) contribute to the (6S)-5,6,7,8-tetrahydrofolate site. Position 229 is an N6-(pyridoxal phosphate)lysine (K229).

The protein belongs to the SHMT family. Homodimer. Requires pyridoxal 5'-phosphate as cofactor.

The protein localises to the cytoplasm. The enzyme catalyses (6R)-5,10-methylene-5,6,7,8-tetrahydrofolate + glycine + H2O = (6S)-5,6,7,8-tetrahydrofolate + L-serine. The protein operates within one-carbon metabolism; tetrahydrofolate interconversion. It participates in amino-acid biosynthesis; glycine biosynthesis; glycine from L-serine: step 1/1. Its function is as follows. Catalyzes the reversible interconversion of serine and glycine with tetrahydrofolate (THF) serving as the one-carbon carrier. This reaction serves as the major source of one-carbon groups required for the biosynthesis of purines, thymidylate, methionine, and other important biomolecules. Also exhibits THF-independent aldolase activity toward beta-hydroxyamino acids, producing glycine and aldehydes, via a retro-aldol mechanism. This is Serine hydroxymethyltransferase from Caldicellulosiruptor bescii (strain ATCC BAA-1888 / DSM 6725 / KCTC 15123 / Z-1320) (Anaerocellum thermophilum).